Here is a 310-residue protein sequence, read N- to C-terminus: Cytochrome f (310 aa).

A signal peptide spans 1–26; that stretch reads MNIKLTLLVLISIINLMIIQPIQTLA. The heme site is built by F27, C47, C50, and H51. The helical transmembrane segment at 276-296 threads the bilayer; that stretch reads IKGMIVFFFTVTIAQIFFVLK.

The protein belongs to the cytochrome f family. As to quaternary structure, the 4 large subunits of the cytochrome b6-f complex are cytochrome b6, subunit IV (17 kDa polypeptide, petD), cytochrome f and the Rieske protein, while the 4 small subunits are PetG, PetL, PetM and PetN. The complex functions as a dimer. It depends on heme as a cofactor.

It localises to the plastid. It is found in the chloroplast thylakoid membrane. In terms of biological role, component of the cytochrome b6-f complex, which mediates electron transfer between photosystem II (PSII) and photosystem I (PSI), cyclic electron flow around PSI, and state transitions. This chain is Cytochrome f, found in Gracilaria tenuistipitata var. liui (Red alga).